Here is a 224-residue protein sequence, read N- to C-terminus: Uracil-DNA glycosylase (224 aa).

D62 (proton acceptor) is an active-site residue.

It belongs to the uracil-DNA glycosylase (UDG) superfamily. UNG family.

Its subcellular location is the cytoplasm. It catalyses the reaction Hydrolyzes single-stranded DNA or mismatched double-stranded DNA and polynucleotides, releasing free uracil.. Excises uracil residues from the DNA which can arise as a result of misincorporation of dUMP residues by DNA polymerase or due to deamination of cytosine. This is Uracil-DNA glycosylase from Aliivibrio salmonicida (strain LFI1238) (Vibrio salmonicida (strain LFI1238)).